A 130-amino-acid chain; its full sequence is MSLMDPLANALNHVSNCEGVGKNVAYLKPASKLIGRVLKVMQDQGYIGNFEYIEDGKAGVYKVDLIGQINKCGAVKPRYAVKYQEFEKFEKRYLPAKGFGLLIVSTPKGLMTHDEARTAGVGGRLISYVY.

It belongs to the universal ribosomal protein uS8 family. Part of the 30S ribosomal subunit.

In terms of biological role, one of the primary rRNA binding proteins, it binds directly to 16S rRNA central domain where it helps coordinate assembly of the platform of the 30S subunit. The sequence is that of Small ribosomal subunit protein uS8 from Methanococcus vannielii (strain ATCC 35089 / DSM 1224 / JCM 13029 / OCM 148 / SB).